Consider the following 335-residue polypeptide: Putative type I specificity subunit S.MpnORF89P (335 aa).

It belongs to the type-I restriction system S methylase family. As to quaternary structure, the methyltransferase is composed of M and S polypeptides.

Functionally, the specificity (S) subunit of a type I methyltransferase (MTase); this subunit dictates DNA sequence specificity. The single R subunit has multiple frameshifts and is probably not expressed. This Mycoplasma pneumoniae (strain ATCC 29342 / M129 / Subtype 1) (Mycoplasmoides pneumoniae) protein is Putative type I specificity subunit S.MpnORF89P.